Here is a 190-residue protein sequence, read N- to C-terminus: Cytoplasmic envelopment protein 3 (190 aa).

Gly-2 carries N-myristoyl glycine; by host lipidation. The disordered stretch occupies residues 27 to 190 (RQVSLRSYDN…TKKPAASLPF (164 aa)). Polar residues predominate over residues 30 to 43 (SLRSYDNIPPTSSS). Residues 44 to 58 (DEGEDDDDGEDDDNE) are compositionally biased toward acidic residues. Positions 80-90 (SHREATHDGSK) are enriched in basic and acidic residues. A compositionally biased stretch (basic residues) spans 108–123 (KQSKKKKKPSKHHHHQ). Residues 130–139 (ETDDLDEEDT) show a composition bias toward acidic residues.

The protein belongs to the herpesviridae cytoplasmic envelopment protein 3 family. As to quaternary structure, interacts with cytoplasmic envelopment protein 2; this interaction is essential for the proper localization of each protein to the assembly complex and thus for the production of infectious virus. Post-translationally, myristoylation and palmitoylation (probably on one or more of the nearby cysteines at the N-terminus) enable membrane-binding and Golgi apparatus-specific targeting and are essential for efficient packaging. Phosphorylated. Phosphorylation does not seem to be required for recycling to the host Golgi apparatus. Packaging is selective for underphosphorylated forms.

The protein resides in the virion tegument. Its subcellular location is the virion membrane. It is found in the host cell membrane. The protein localises to the host Golgi apparatus membrane. Its function is as follows. Plays an important role in the cytoplasmic envelopment of tegument proteins and capsids during the assembly and egress processes. Also participates in viral entry at the fusion step probably by regulating the core fusion machinery. In Human cytomegalovirus (strain AD169) (HHV-5), this protein is Cytoplasmic envelopment protein 3 (UL99).